The primary structure comprises 403 residues: Tryptophan 2,3-dioxygenase (403 aa).

69–73 serves as a coordination point for substrate; the sequence is FIVIH. The PLD motif; required for enzymatic activity signature appears at 133-135; the sequence is PLD. Arg140 is a substrate binding site. His327 is a heme binding site. Thr341 is a substrate binding site.

The protein belongs to the tryptophan 2,3-dioxygenase family. Homotetramer. Dimer of dimers. The cofactor is heme. As to expression, expressed in body wall muscle cells, hypodermis, PLM neurons and touch-receptor neurons.

It carries out the reaction L-tryptophan + O2 = N-formyl-L-kynurenine. It functions in the pathway amino-acid degradation; L-tryptophan degradation via kynurenine pathway; L-kynurenine from L-tryptophan: step 1/2. Functionally, heme-dependent dioxygenase that catalyzes the oxidative cleavage of the L-tryptophan (L-Trp) pyrrole ring and converts L-tryptophan to N-formyl-L-kynurenine. Catalyzes the oxidative cleavage of the indole moiety. Involved in regulation of protein homeostasis, longevity and reproducive life span. Specifically regulates proteotoxicity due to age-related aggregation of proteins like alpha-synuclein, via its effects on tryptophan metabolism. This is Tryptophan 2,3-dioxygenase from Caenorhabditis elegans.